The following is a 236-amino-acid chain: 2,3,4,5-tetrahydropyridine-2,6-dicarboxylate N-acetyltransferase (236 aa).

Belongs to the transferase hexapeptide repeat family. DapH subfamily.

The catalysed reaction is (S)-2,3,4,5-tetrahydrodipicolinate + acetyl-CoA + H2O = L-2-acetamido-6-oxoheptanedioate + CoA. It functions in the pathway amino-acid biosynthesis; L-lysine biosynthesis via DAP pathway; LL-2,6-diaminopimelate from (S)-tetrahydrodipicolinate (acetylase route): step 1/3. Its function is as follows. Catalyzes the transfer of an acetyl group from acetyl-CoA to tetrahydrodipicolinate. In Brevibacillus brevis (strain 47 / JCM 6285 / NBRC 100599), this protein is 2,3,4,5-tetrahydropyridine-2,6-dicarboxylate N-acetyltransferase.